The following is a 421-amino-acid chain: MNHLKDQSKSIVLGISSGIGIFLISGGINIFKNVGQYILNRINSNIYYRIDVDSKDKSFEWLLYWLSENDSIKVSNHLNAETVYNLVGKNPKVILVPSVGKHRIVYKGKWIWIDRVRDQQFDMGAGAPFESISISTYKSNAQLINQLLQEAMTLSLNRDIGKTVIYINGGNGNWERFGNPRSIRSLSSVILADDLKSKLIEDIKSFITNESWYRNRGIPYRRGYLLYGEPGNGKSSLINAIAGELNLDICIVSLSSKDIDDKQINHLLNNAPPKSILLIEDIDAAFKSHRDNVDSNNNNSNNNNSLTYSGLLNALDGVASQEGRILFMTTNKIELLDSALIREGRIDLKIKVSNATKSQAAQLFTHFYNLPTDNQLAIRFSENLHDHQLSMSQIQGFLLKYINSPEKAIEEVQSITPFNLN.

Residues 1–10 (MNHLKDQSKS) lie on the Mitochondrial intermembrane side of the membrane. Residues 11–31 (IVLGISSGIGIFLISGGINIF) form a helical membrane-spanning segment. Residues 32-421 (KNVGQYILNR…VQSITPFNLN (390 aa)) are Mitochondrial matrix-facing. 228 to 235 (GEPGNGKS) is a binding site for ATP.

Belongs to the AAA ATPase family. BCS1 subfamily.

It is found in the mitochondrion inner membrane. The catalysed reaction is ATP + H2O = ADP + phosphate + H(+). Functionally, chaperone necessary for the assembly of mitochondrial respiratory chain complex III. The chain is Probable mitochondrial chaperone BCS1-A (bcs1la) from Dictyostelium discoideum (Social amoeba).